Here is a 475-residue protein sequence, read N- to C-terminus: FAD-dependent monooxygenase spyC (475 aa).

Residues 1–24 form the signal peptide; it reads MTAKPPFKVIIVGGSIAGLTLAHC. Residues Glu36, Gly50, Arg109, Asp310, and Ala323 each coordinate FAD. Residues 444 to 464 traverse the membrane as a helical segment; the sequence is LLIPFLYPVVAFSLCVLAWIG.

Belongs to the paxM FAD-dependent monooxygenase family. It depends on FAD as a cofactor.

It localises to the membrane. The catalysed reaction is (2E,6E,10E)-geranylgeranyl-triacetate lactone + AH2 + O2 = (S)-(2E,6E,10E)-epoxygeranylgeranyl-triacetate lactone + A + H2O. It functions in the pathway secondary metabolite biosynthesis; terpenoid biosynthesis. Its function is as follows. FAD-dependent monooxygenase spyC; part of the gene cluster that mediates the biosynthesis of meroterpenoids called sartorypyrones. Within the pathway, spyC catalyzes the epoxidation of geranylgeranyl-triacetate lactone at the terminal olein to yield epoxygeranylgeranyl-triacetate lactone. The biosynthesis of sartorypyrones begins with the production of triacetic acid lactone (TAL) by the NR-PKS spyA using one molecule of acetyl-CoA and two molecules of malonyl-CoA. The prenyltransferase spyF then conjugates geranylgeranyl pyrophosphate (GGPP) to TAL to form geranylgeranyl-triacetate lactone, for which the pathway-specific geranylgeranyl pyrophosphate synthase (GGPS) spyE is required to provide GGPP. Subsequently, geranylgeranyl-triacetate lactone is epoxidized at the terminal olein by the FAD-dependent monooxygenase spyC, followed by cyclization of the terpenoid component catalyzed by the terpene cyclase spyD to produce both the bicyclic sartorypyrone F and the monocyclic sartorypyrone D. Finally, the last step of the biosynthesis involves the acetylation of the meroterpenoids sartorypyrones D and F by the acetyltransferase SpyB to produce sartorypyrones A and G, respectively. In Aspergillus fumigatus (strain ATCC MYA-4609 / CBS 101355 / FGSC A1100 / Af293) (Neosartorya fumigata), this protein is FAD-dependent monooxygenase spyC.